A 2431-amino-acid chain; its full sequence is Histone-lysine N-methyltransferase trr (2431 aa).

4 disordered regions span residues 34-78 (LQKR…STAP), 135-201 (DADK…ENSG), 213-235 (ASGADSSTSVGNSTGTGTPAGTP), and 759-789 (QSANQIQMATSTSTASNPSTPNPTVNATPMN). The span at 142-165 (YRISTPRNSQSNPLLHRNTAFTSF) shows a compositional bias: polar residues. Composition is skewed to low complexity over residues 171 to 183 (ASSSASSSSSTAS), 218 to 235 (SSTSVGNSTGTGTPAGTP), and 767 to 787 (ATSTSTASNPSTPNPTVNATP). The short motif at 801-805 (LKQLL) is the LXXLL motif 1 element. Disordered regions lie at residues 863-895 (PVPTATQAAGSSSSSGSVATSTTTTTVASGGSS), 918-973 (VGGE…QVKQ), 1226-1292 (HPQQ…AGGA), 1404-1433 (TSGGGSPASMSSAASAGSSSAGGGKLKGGS), and 1478-1500 (GLVGGSARTRSPSPAESPGAEKM). Low complexity-rich tracts occupy residues 866-895 (TATQAAGSSSSSGSVATSTTTTTVASGGSS), 952-970 (QQQQQQLHQPQQLQPSPHQ), and 1226-1241 (HPQQQQQQLHQNQPQN). The segment covering 1269–1281 (RKRRKREVQKPRR) has biased composition (basic residues). The span at 1410 to 1422 (PASMSSAASAGSS) shows a compositional bias: low complexity. Residues 1423 to 1433 (SAGGGKLKGGS) are compositionally biased toward gly residues. A Phosphothreonine modification is found at threonine 1486. 2 positions are modified to phosphoserine: serine 1488 and serine 1490. Residues 1652 to 1656 (LANLL) carry the LXXLL motif 2 motif. Residues 1790 to 1836 (GGSAVKSSNGDSPGSFCASSTAPAEMVVKQEPEDEDEKTPSVPGNPT) are disordered. Polar residues predominate over residues 1794–1811 (VKSSNGDSPGSFCASSTA). The C2HC pre-PHD-type zinc-finger motif lies at 1895–1935 (TRQCVFCNQRGDGQADGPSRLLNFDVDKWVHLNCALWSNGV). The segment at 1956-2003 (QACSACHQPGATIKCFKSRCNSLYHLPCAIREECVFYKNKSVHCSVHG) adopts a PHD-type zinc-finger fold. The short motif at 2060–2064 (LSNLL) is the LXXLL motif 3 element. In terms of domain architecture, FYR N-terminal spans 2061–2121 (SNLLRVGNMT…CRYICSIAEA (61 aa)). One can recognise an FYR C-terminal domain in the interval 2122 to 2209 (GCKPEFRIQV…ETLTDYRFKY (88 aa)). Residues 2291 to 2407 (NNVYLARSKI…RGEELSYDYK (117 aa)) form the SET domain. A Post-SET domain is found at 2415 to 2431 (HKIPCACGAPNCRKWMN).

The protein belongs to the class V-like SAM-binding methyltransferase superfamily. Histone-lysine methyltransferase family. TRX/MLL subfamily. Component of the MLL3/4 complex composed at least of the catalytic subunit trr, ash2, Rbbp5, Dpy-30L1, wds, hcf, ptip, Pa1, Utx, Lpt and Ncoa6. Interacts with nuclear receptor EcR in an ecdysone-dependent manner. Interacts with ash2; the interaction stabilizes trr. Widely expressed.

The protein localises to the nucleus. Its subcellular location is the chromosome. It catalyses the reaction L-lysyl(4)-[histone H3] + 3 S-adenosyl-L-methionine = N(6),N(6),N(6)-trimethyl-L-lysyl(4)-[histone H3] + 3 S-adenosyl-L-homocysteine + 3 H(+). Functionally, histone methyltransferase that acts as a coactivator for the ecdysone receptor during development. Specifically trimethylates 'Lys-4' of histone H3, a specific tag for epigenetic transcriptional activation. Recruited by EcR in an ecdysone-dependent manner causing H3 'Lys-4' trimethylation at ecdysone-inducible promoters, leading to activate expression. Plays a central role in the developing compound eye, during the progression of the morphogenetic furrow and in post-furrow differentiation of the retinal epithelium, notably by activating expression of hh. Also required for wing and abdominal development. This is Histone-lysine N-methyltransferase trr (trr) from Drosophila melanogaster (Fruit fly).